The chain runs to 254 residues: Trypsin 3A1 (254 aa).

Residues 1-20 (MNQFLFVSFCALLGLSQVSA) form the signal peptide. Residues 21-27 (ATLSSGR) constitute a propeptide, activation peptide. Residues 28-253 (IVGGFQIDIA…VRQWIREVSE (226 aa)) enclose the Peptidase S1 domain. A disulfide bridge links Cys53 with Cys69. Catalysis depends on charge relay system residues His68 and Asp113. 2 disulfides stabilise this stretch: Cys178–Cys194 and Cys205–Cys229. Ser209 functions as the Charge relay system in the catalytic mechanism.

It belongs to the peptidase S1 family. Midgut.

The protein resides in the secreted. It is found in the extracellular space. It catalyses the reaction Preferential cleavage: Arg-|-Xaa, Lys-|-Xaa.. Functionally, major function may be to aid in digestion of the blood meal. The sequence is that of Trypsin 3A1 from Aedes aegypti (Yellowfever mosquito).